A 326-amino-acid polypeptide reads, in one-letter code: Toluene-4-monooxygenase system, ferredoxin--NAD(+) reductase component (326 aa).

In terms of domain architecture, 2Fe-2S ferredoxin-type spans 1-92 (MFNIQSDDLL…DLKIKVINRA (92 aa)). [2Fe-2S] cluster is bound by residues cysteine 36, cysteine 41, cysteine 44, and cysteine 76. A ferredoxin-reductase region spans residues 95 to 326 (RASHPPKRFS…FEAIHFDRFF (232 aa)). The 96-residue stretch at 100 to 195 (PKRFSTRVVS…DGPYGLSVLK (96 aa)) folds into the FAD-binding FR-type domain. Residues 146-149 (RAYS), 162-164 (IVK), and 170-172 (KVS) each bind FAD.

The protein belongs to the bacterial ring-hydroxylating dioxygenase ferredoxin reductase family. As to quaternary structure, monomer. The alkene monooxygenase multicomponent enzyme system is composed of an electron transfer component and a monooxygenase component interacting with the effector protein TmoD. The electron transfer component is composed of a ferredoxin reductase (TmoF) and a ferredoxin (TmoC), and the monooxygenase component is formed by a heterohexamer (dimer of heterotrimers) of two alpha subunits (TmoA), two beta subunits (TmoE) and two gamma subunits (TmoB). FAD is required as a cofactor. [2Fe-2S] cluster serves as cofactor.

The catalysed reaction is 2 reduced [2Fe-2S]-[ferredoxin] + NAD(+) + H(+) = 2 oxidized [2Fe-2S]-[ferredoxin] + NADH. The protein operates within xenobiotic degradation; toluene degradation. Functionally, reductase component of the toluene-4-monooxygenase multicomponent enzyme system which catalyzes the O2- and NADH-dependent hydroxylation of toluene to form p-cresol. Ferredoxin reductase catalyzes the transfer of electrons from NADH to ferredoxin (TmoC). In Ectopseudomonas mendocina (Pseudomonas mendocina), this protein is Toluene-4-monooxygenase system, ferredoxin--NAD(+) reductase component.